Reading from the N-terminus, the 446-residue chain is Actin-related protein 6 (446 aa).

Residues 1–11 (MTGRGGAKKSR) show a composition bias toward basic residues. The interval 1–24 (MTGRGGAKKSRAAGPAPPTTTLVL) is disordered.

Belongs to the actin family. ARP6 subfamily. Component of the SWR1 chromatin remodeling complex.

The protein localises to the cytoplasm. Its subcellular location is the cytoskeleton. It localises to the nucleus. In terms of biological role, component of the SWR1 complex which mediates the ATP-dependent exchange of histone H2A for the H2A variant H2A.Z leading to transcriptional regulation of selected genes by chromatin remodeling. Involved in chromosome stability. The polypeptide is Actin-related protein 6 (arp-6) (Neurospora crassa (strain ATCC 24698 / 74-OR23-1A / CBS 708.71 / DSM 1257 / FGSC 987)).